The sequence spans 238 residues: uncharacterized protein (238 aa).

An N-terminal signal peptide occupies residues 1 to 20 (MNNVKLLIAGSAFFAMSAQA).

This sequence to E.coli GltF.

This is an uncharacterized protein from Escherichia coli (strain K12).